The following is a 603-amino-acid chain: Prostaglandin G/H synthase 1 (603 aa).

Residues M1–P27 form the signal peptide. The 39-residue stretch at P35–T73 folds into the EGF-like domain. Intrachain disulfides connect C39–C50, C40–C162, C44–C60, and C62–C72. Residues N71, N107, and N147 are each glycosylated (N-linked (GlcNAc...) asparagine). H210 acts as the Proton acceptor in catalysis. Y388 acts as the For cyclooxygenase activity in catalysis. H391 contributes to the heme b binding site. An intrachain disulfide couples C572 to C578.

This sequence belongs to the prostaglandin G/H synthase family. Homodimer. The cofactor is heme b. In terms of processing, N-glycosylated. N-linked glycosylation is necessary for enzymatic activity. In terms of tissue distribution, brain cortex. Isoform 2 is expressed in the cerebral cortex and heart.

The protein localises to the microsome membrane. The protein resides in the endoplasmic reticulum membrane. The enzyme catalyses (5Z,8Z,11Z,14Z)-eicosatetraenoate + AH2 + 2 O2 = prostaglandin H2 + A + H2O. It carries out the reaction (5Z,8Z,11Z,14Z)-eicosatetraenoate + 2 O2 = prostaglandin G2. It catalyses the reaction prostaglandin G2 + AH2 = prostaglandin H2 + A + H2O. The catalysed reaction is (9Z,12Z)-octadecadienoate + AH2 + O2 = (9R)-hydroxy-(10E,12Z)-octadecadienoate + A + H2O. The enzyme catalyses (9Z,12Z)-octadecadienoate + AH2 + O2 = (9S)-hydroxy-(10E,12Z)-octadecadienoate + A + H2O. It carries out the reaction (9Z,12Z)-octadecadienoate + AH2 + O2 = (13S)-hydroxy-(9Z,11E)-octadecadienoate + A + H2O. It catalyses the reaction (9Z,12Z)-octadecadienoate + AH2 + O2 = (13R)-hydroxy-(9Z,11E)-octadecadienoate + A + H2O. It participates in lipid metabolism; prostaglandin biosynthesis. With respect to regulation, the cyclooxygenase activity is inhibited by nonsteroidal anti-inflammatory drugs (NSAIDs) including ibuprofen, flurbiprofen, ketoprofen, naproxen, flurbiprofen, anirolac, fenclofenac and diclofenac. Functionally, dual cyclooxygenase and peroxidase that plays an important role in the biosynthesis pathway of prostanoids, a class of C20 oxylipins mainly derived from arachidonate ((5Z,8Z,11Z,14Z)-eicosatetraenoate, AA, C20:4(n-6)), with a particular role in the inflammatory response. The cyclooxygenase activity oxygenates AA to the hydroperoxy endoperoxide prostaglandin G2 (PGG2), and the peroxidase activity reduces PGG2 to the hydroxy endoperoxide prostaglandin H2 (PGH2), the precursor of all 2-series prostaglandins and thromboxanes. This complex transformation is initiated by abstraction of hydrogen at carbon 13 (with S-stereochemistry), followed by insertion of molecular O2 to form the endoperoxide bridge between carbon 9 and 11 that defines prostaglandins. The insertion of a second molecule of O2 (bis-oxygenase activity) yields a hydroperoxy group in PGG2 that is then reduced to PGH2 by two electrons. Involved in the constitutive production of prostanoids in particular in the stomach and platelets. In gastric epithelial cells, it is a key step in the generation of prostaglandins, such as prostaglandin E2 (PGE2), which plays an important role in cytoprotection. In platelets, it is involved in the generation of thromboxane A2 (TXA2), which promotes platelet activation and aggregation, vasoconstriction and proliferation of vascular smooth muscle cells. Can also use linoleate (LA, (9Z,12Z)-octadecadienoate, C18:2(n-6)) as substrate and produce hydroxyoctadecadienoates (HODEs) in a regio- and stereospecific manner, being (9R)-HODE ((9R)-hydroxy-(10E,12Z)-octadecadienoate) and (13S)-HODE ((13S)-hydroxy-(9Z,11E)-octadecadienoate) its major products. The sequence is that of Prostaglandin G/H synthase 1 (PTGS1) from Canis lupus familiaris (Dog).